Reading from the N-terminus, the 245-residue chain is tRNA (guanine-N(1)-)-methyltransferase (245 aa).

S-adenosyl-L-methionine contacts are provided by residues G112 and 132–137; that span reads IGDFVL.

This sequence belongs to the RNA methyltransferase TrmD family. As to quaternary structure, homodimer.

It is found in the cytoplasm. The catalysed reaction is guanosine(37) in tRNA + S-adenosyl-L-methionine = N(1)-methylguanosine(37) in tRNA + S-adenosyl-L-homocysteine + H(+). Functionally, specifically methylates guanosine-37 in various tRNAs. The sequence is that of tRNA (guanine-N(1)-)-methyltransferase from Geobacter sulfurreducens (strain ATCC 51573 / DSM 12127 / PCA).